Consider the following 101-residue polypeptide: Large ribosomal subunit protein uL23 (101 aa).

Belongs to the universal ribosomal protein uL23 family. Part of the 50S ribosomal subunit. Contacts protein L29, and trigger factor when it is bound to the ribosome.

Functionally, one of the early assembly proteins it binds 23S rRNA. One of the proteins that surrounds the polypeptide exit tunnel on the outside of the ribosome. Forms the main docking site for trigger factor binding to the ribosome. The polypeptide is Large ribosomal subunit protein uL23 (Corynebacterium kroppenstedtii (strain DSM 44385 / JCM 11950 / CIP 105744 / CCUG 35717)).